A 987-amino-acid chain; its full sequence is ATP-dependent 6-phosphofructokinase subunit alpha (987 aa).

Residues Met1–Ile602 form an N-terminal catalytic PFK domain 1 region. ATP is bound by residues Gly237, Arg300–Cys301, and Gly330–Ser333. Residue Asp331 coordinates Mg(2+). Residues Ser376 to Asp378, Arg413, Met420 to Arg422, Glu477, Arg504, and His510 to Arg513 each bind beta-D-fructose 6-phosphate. Residue Asp378 is the Proton acceptor of the active site. The tract at residues Tyr603–Leu616 is interdomain linker. The tract at residues Asn617–Tyr987 is C-terminal regulatory PFK domain 2. Residues Arg686, Thr743–Asn747, Arg781, Gln788–Gly790, Glu848, Arg874, His880–Gln883, and Arg958 contribute to the beta-D-fructose 2,6-bisphosphate site.

The protein belongs to the phosphofructokinase type A (PFKA) family. ATP-dependent PFK group I subfamily. Eukaryotic two domain clade 'E' sub-subfamily. As to quaternary structure, heterooctamer of 4 alpha and 4 beta chains. It depends on Mg(2+) as a cofactor.

The protein localises to the cytoplasm. It carries out the reaction beta-D-fructose 6-phosphate + ATP = beta-D-fructose 1,6-bisphosphate + ADP + H(+). It functions in the pathway carbohydrate degradation; glycolysis; D-glyceraldehyde 3-phosphate and glycerone phosphate from D-glucose: step 3/4. Allosterically activated by ADP, AMP, or fructose 2,6-bisphosphate, and allosterically inhibited by ATP or citrate. Catalyzes the phosphorylation of D-fructose 6-phosphate to fructose 1,6-bisphosphate by ATP, the first committing step of glycolysis. The polypeptide is ATP-dependent 6-phosphofructokinase subunit alpha (PFK1) (Candida albicans (Yeast)).